A 539-amino-acid chain; its full sequence is Alpha-aminoadipic semialdehyde dehydrogenase (539 aa).

A mitochondrion-targeting transit peptide spans 1–26; it reads MLRLARPLCVQTVKASKLSRLWSRPA. An N6-acetyllysine; alternate mark is found at lysine 86, lysine 94, and lysine 97. Residues lysine 86, lysine 94, and lysine 97 each carry the N6-succinyllysine; alternate modification. NAD(+) contacts are provided by residues 192–194, lysine 218, 258–259, 274–275, 274–279, and 296–297; these read TAF, GT, GS, GSTQVG, and EL. The active-site Proton acceptor is glutamate 296. The active-site Nucleophile is the cysteine 330. Position 331 (threonine 331) interacts with (S)-2-amino-6-oxohexanoate. Glutamate 427 serves as a coordination point for NAD(+). At lysine 462 the chain carries N6-acetyllysine. Positions 489 and 490 each coordinate (S)-2-amino-6-oxohexanoate. Lysine 500 is subject to N6-acetyllysine. Lysine 537 bears the N6-succinyllysine mark.

It belongs to the aldehyde dehydrogenase family. Homotetramer. In terms of tissue distribution, abundant in kidney, liver, cochlea and outer hair cells but not inner hair cells or vestibular type I hair cells. Very low levels in lung, brain, intestine and pancreas.

Its subcellular location is the cytoplasm. The protein localises to the cytosol. The protein resides in the nucleus. It localises to the mitochondrion. The enzyme catalyses nonanal + NAD(+) + H2O = nonanoate + NADH + 2 H(+). It catalyses the reaction (S)-2-amino-6-oxohexanoate + NAD(+) + H2O = L-2-aminoadipate + NADH + 2 H(+). It carries out the reaction betaine aldehyde + NAD(+) + H2O = glycine betaine + NADH + 2 H(+). The catalysed reaction is an aldehyde + NAD(+) + H2O = a carboxylate + NADH + 2 H(+). The enzyme catalyses hexanal + NAD(+) + H2O = hexanoate + NADH + 2 H(+). It catalyses the reaction octanal + NAD(+) + H2O = octanoate + NADH + 2 H(+). It carries out the reaction (E)-non-2-enal + NAD(+) + H2O = (E)-non-2-enoate + NADH + 2 H(+). The catalysed reaction is (E)-4-hydroxynon-2-enal + NAD(+) + H2O = (E)-4-hydroxynon-2-enoate + NADH + 2 H(+). The protein operates within amine and polyamine biosynthesis; betaine biosynthesis via choline pathway; betaine from betaine aldehyde: step 1/1. Its function is as follows. Multifunctional enzyme mediating important protective effects. Metabolizes betaine aldehyde to betaine, an important cellular osmolyte and methyl donor. Protects cells from oxidative stress by metabolizing a number of lipid peroxidation-derived aldehydes. Involved in lysine catabolism. This chain is Alpha-aminoadipic semialdehyde dehydrogenase, found in Rattus norvegicus (Rat).